We begin with the raw amino-acid sequence, 89 residues long: Small ribosomal subunit protein uS15 (89 aa).

The protein belongs to the universal ribosomal protein uS15 family. As to quaternary structure, part of the 30S ribosomal subunit. Forms a bridge to the 50S subunit in the 70S ribosome, contacting the 23S rRNA.

Functionally, one of the primary rRNA binding proteins, it binds directly to 16S rRNA where it helps nucleate assembly of the platform of the 30S subunit by binding and bridging several RNA helices of the 16S rRNA. Its function is as follows. Forms an intersubunit bridge (bridge B4) with the 23S rRNA of the 50S subunit in the ribosome. The sequence is that of Small ribosomal subunit protein uS15 from Nitrosospira multiformis (strain ATCC 25196 / NCIMB 11849 / C 71).